We begin with the raw amino-acid sequence, 120 residues long: MASRKEALVRRANRVRRQIKAVANGRPRLSVHRSSKNIYVQVIDDVAGRTLAAASTLDGSLRSSLKTGADTAAAAAVGKLVAERAVAAGVKEVVFDRGAFIYHGRIKALAEAAREGGLSF.

The protein belongs to the universal ribosomal protein uL18 family. In terms of assembly, part of the 50S ribosomal subunit; part of the 5S rRNA/L5/L18/L25 subcomplex. Contacts the 5S and 23S rRNAs.

Its function is as follows. This is one of the proteins that bind and probably mediate the attachment of the 5S RNA into the large ribosomal subunit, where it forms part of the central protuberance. In Allorhizobium ampelinum (strain ATCC BAA-846 / DSM 112012 / S4) (Agrobacterium vitis (strain S4)), this protein is Large ribosomal subunit protein uL18.